The primary structure comprises 745 residues: Serine/threonine-protein kinase BUR1 (745 aa).

The disordered stretch occupies residues 1-21 (MSVIAGHHVPRSNDQRQYDTP). Residues 44-349 (YEVIEKLGQG…ALDALNHKFF (306 aa)) form the Protein kinase domain. ATP-binding positions include 50 to 58 (LGQGTFGVV) and Lys-73. Residue Asp-179 is the Proton acceptor of the active site. Composition is skewed to basic and acidic residues over residues 380–406 (DKEQ…RYNA), 428–475 (DYID…DIQN), and 493–508 (KLRE…KKYD). The tract at residues 380 to 701 (DKEQAVSELK…EVSDLEEDSD (322 aa)) is disordered. Positions 516–534 (SRGSKSPSPSKLSSISQSK) are enriched in low complexity. Over residues 547 to 557 (ASRESSLERKQ) the composition is skewed to basic and acidic residues. Composition is skewed to polar residues over residues 558–567 (VSNGIRTTTD) and 586–598 (LTSN…PTRN). Residues 599-631 (KSVERPKDLEKPTNGVTEDRNKKPVLEEKKEVV) are compositionally biased toward basic and acidic residues. Over residues 632–660 (KPNLAIPKIKKSSSLVSLSSRSSTTPVIS) the composition is skewed to low complexity. Residues 661–674 (NPSKVTKRAASSVT) are compositionally biased toward polar residues. Acidic residues predominate over residues 692 to 701 (EVSDLEEDSD).

The protein belongs to the protein kinase superfamily. CMGC Ser/Thr protein kinase family. CDC2/CDKX subfamily.

The protein localises to the nucleus. It catalyses the reaction L-seryl-[protein] + ATP = O-phospho-L-seryl-[protein] + ADP + H(+). The enzyme catalyses L-threonyl-[protein] + ATP = O-phospho-L-threonyl-[protein] + ADP + H(+). The catalysed reaction is [DNA-directed RNA polymerase] + ATP = phospho-[DNA-directed RNA polymerase] + ADP + H(+). Functionally, serine/threonine-protein kinase involved in transcription regulation. Phosphorylates the UBC2/RAD6 ubiquitin-conjugating enzyme (E2), leading to monoubiquitination of histone H2B and the silencing of telomeric-associated genes. Also required for histone H3 methylation. Necessary for the recovery from pheromone-induced growth arrest in the cell cycle G1 phase. Required for pseudohyphal growth and virulence in mice. This Candida albicans (strain SC5314 / ATCC MYA-2876) (Yeast) protein is Serine/threonine-protein kinase BUR1 (CRK1).